The following is a 452-amino-acid chain: Inner membrane metabolite transport protein YdjE (452 aa).

At 1–20 the chain is on the cytoplasmic side; that stretch reads MEQYDQIGARLDRLPLARFH. A helical membrane pass occupies residues 21–43; that stretch reads YRIFGIISFSLLLTGFLSYSGNV. Residues 44–57 lie on the Periplasmic side of the membrane; that stretch reads VLAKLVSNGWSNNF. A helical transmembrane segment spans residues 58–80; it reads LNAAFTSALMFGYFIGSLTGGFI. The Cytoplasmic portion of the chain corresponds to 81 to 91; it reads GDYFGRRRAFR. Residues 92 to 114 traverse the membrane as a helical segment; that stretch reads INLLIVGIAATGAAFVPDMYWLI. Over 115 to 117 the chain is Periplasmic; sequence FFR. The chain crosses the membrane as a helical span at residues 118–140; that stretch reads FLMGTGMGALIMVGYASFTEFIP. The Cytoplasmic segment spans residues 141-152; it reads ATVRGKWSARLS. The helical transmembrane segment at 153–175 threads the bilayer; it reads FVGNWSPMLSAAIGVVVIAFFSW. The Periplasmic portion of the chain corresponds to 176-178; the sequence is RIM. Residues 179–198 form a helical membrane-spanning segment; it reads FLLGGIGILLAWFLSGKYFI. The Cytoplasmic portion of the chain corresponds to 199-265; sequence ESPRWLAGKG…KGEMLRRTLV (67 aa). The chain crosses the membrane as a helical span at residues 266–288; the sequence is AITVLIAMNISLYTITVWIPTIF. Residues 289 to 297 are Periplasmic-facing; the sequence is VNSGIDVDK. Residues 298-320 traverse the membrane as a helical segment; it reads SILMTAVIMIGAPVGIFIAALII. The Cytoplasmic portion of the chain corresponds to 321–326; the sequence is DHFPRR. The helical transmembrane segment at 327–344 threads the bilayer; the sequence is LFGSTLLIIIAVLGYIYS. Over 345–353 the chain is Periplasmic; that stretch reads IQTTEWAIL. The helical transmembrane segment at 354–376 threads the bilayer; it reads IYGLVMIFFLYMYVCFASAVYIP. Over 377–388 the chain is Cytoplasmic; it reads ELWPTHLRLRGS. A helical transmembrane segment spans residues 389-411; it reads GFVNAVGRIVAVFTPYGVAALLT. Over 412–415 the chain is Periplasmic; sequence HYGS. Residues 416–438 form a helical membrane-spanning segment; sequence ITVFMVLGVMLLLCALVLSIFGI. Topologically, residues 439-452 are cytoplasmic; that stretch reads ETRKVSLEEISEVN.

It belongs to the major facilitator superfamily. Sugar transporter (TC 2.A.1.1) family.

The protein resides in the cell inner membrane. The polypeptide is Inner membrane metabolite transport protein YdjE (ydjE) (Escherichia coli (strain K12)).